Here is a 372-residue protein sequence, read N- to C-terminus: Glutamate 5-kinase (372 aa).

Residue K14 participates in ATP binding. Substrate contacts are provided by S54, D141, and N153. 173–174 (TD) contributes to the ATP binding site. The PUA domain occupies 280-358 (RGTVVIDDGA…SQIESLLGYS (79 aa)).

It belongs to the glutamate 5-kinase family.

It localises to the cytoplasm. It carries out the reaction L-glutamate + ATP = L-glutamyl 5-phosphate + ADP. It functions in the pathway amino-acid biosynthesis; L-proline biosynthesis; L-glutamate 5-semialdehyde from L-glutamate: step 1/2. Functionally, catalyzes the transfer of a phosphate group to glutamate to form L-glutamate 5-phosphate. In Methylibium petroleiphilum (strain ATCC BAA-1232 / LMG 22953 / PM1), this protein is Glutamate 5-kinase.